Here is a 409-residue protein sequence, read N- to C-terminus: Dihydrolipoyllysine-residue succinyltransferase component of 2-oxoglutarate dehydrogenase complex (409 aa).

In terms of domain architecture, Lipoyl-binding spans 2–77 (AIEILVPDLP…VSKQLLGKIS (76 aa)). Lys-43 bears the N6-lipoyllysine mark. The span at 83-107 (DVSSATLKATNEPTPSDRQNAAIEN) shows a compositional bias: polar residues. Residues 83–114 (DVSSATLKATNEPTPSDRQNAAIENSHNHNAD) are disordered. The region spanning 114–151 (DQSPVIRRLLAEHDLQADQIQGSGVGGRLTREDIEREI) is the Peripheral subunit-binding (PSBD) domain. Catalysis depends on residues His-380 and Asp-384.

The protein belongs to the 2-oxoacid dehydrogenase family. As to quaternary structure, forms a 24-polypeptide structural core with octahedral symmetry. Part of the 2-oxoglutarate dehydrogenase (OGDH) complex composed of E1 (2-oxoglutarate dehydrogenase), E2 (dihydrolipoamide succinyltransferase) and E3 (dihydrolipoamide dehydrogenase); the complex contains multiple copies of the three enzymatic components (E1, E2 and E3). Requires (R)-lipoate as cofactor.

It carries out the reaction N(6)-[(R)-dihydrolipoyl]-L-lysyl-[protein] + succinyl-CoA = N(6)-[(R)-S(8)-succinyldihydrolipoyl]-L-lysyl-[protein] + CoA. It functions in the pathway amino-acid degradation; L-lysine degradation via saccharopine pathway; glutaryl-CoA from L-lysine: step 6/6. Functionally, E2 component of the 2-oxoglutarate dehydrogenase (OGDH) complex which catalyzes the second step in the conversion of 2-oxoglutarate to succinyl-CoA and CO(2). This chain is Dihydrolipoyllysine-residue succinyltransferase component of 2-oxoglutarate dehydrogenase complex (sucB), found in Haemophilus influenzae (strain ATCC 51907 / DSM 11121 / KW20 / Rd).